A 294-amino-acid chain; its full sequence is Acetyl-coenzyme A carboxylase carboxyl transferase subunit beta (294 aa).

The 265-residue stretch at 30-294 folds into the CoA carboxyltransferase N-terminal domain; the sequence is IMTKCPECKK…PEVGGEADGE (265 aa). Residues Cys34, Cys37, Cys53, and Cys56 each contribute to the Zn(2+) site. The C4-type zinc-finger motif lies at 34 to 56; that stretch reads CPECKKIMYTKELQKNLMVCNYC.

It belongs to the AccD/PCCB family. In terms of assembly, acetyl-CoA carboxylase is a heterohexamer composed of biotin carboxyl carrier protein (AccB), biotin carboxylase (AccC) and two subunits each of ACCase subunit alpha (AccA) and ACCase subunit beta (AccD). The cofactor is Zn(2+).

It is found in the cytoplasm. It catalyses the reaction N(6)-carboxybiotinyl-L-lysyl-[protein] + acetyl-CoA = N(6)-biotinyl-L-lysyl-[protein] + malonyl-CoA. Its pathway is lipid metabolism; malonyl-CoA biosynthesis; malonyl-CoA from acetyl-CoA: step 1/1. Its function is as follows. Component of the acetyl coenzyme A carboxylase (ACC) complex. Biotin carboxylase (BC) catalyzes the carboxylation of biotin on its carrier protein (BCCP) and then the CO(2) group is transferred by the transcarboxylase to acetyl-CoA to form malonyl-CoA. The chain is Acetyl-coenzyme A carboxylase carboxyl transferase subunit beta from Listeria monocytogenes serotype 4b (strain F2365).